The sequence spans 643 residues: 1-deoxy-D-xylulose-5-phosphate synthase (643 aa).

Thiamine diphosphate is bound by residues H72 and 113-115 (GHA). D144 is a binding site for Mg(2+). Residues 145-146 (GA), N174, Y287, and E370 contribute to the thiamine diphosphate site. N174 contacts Mg(2+).

This sequence belongs to the transketolase family. DXPS subfamily. As to quaternary structure, homodimer. Mg(2+) serves as cofactor. Thiamine diphosphate is required as a cofactor.

The catalysed reaction is D-glyceraldehyde 3-phosphate + pyruvate + H(+) = 1-deoxy-D-xylulose 5-phosphate + CO2. The protein operates within metabolic intermediate biosynthesis; 1-deoxy-D-xylulose 5-phosphate biosynthesis; 1-deoxy-D-xylulose 5-phosphate from D-glyceraldehyde 3-phosphate and pyruvate: step 1/1. Functionally, catalyzes the acyloin condensation reaction between C atoms 2 and 3 of pyruvate and glyceraldehyde 3-phosphate to yield 1-deoxy-D-xylulose-5-phosphate (DXP). This chain is 1-deoxy-D-xylulose-5-phosphate synthase, found in Prochlorococcus marinus (strain MIT 9211).